A 262-amino-acid chain; its full sequence is Proteasome subunit alpha (262 aa).

The interval 235–262 (LLPTTGESDAGDSGADGSPSGDSPDTSA) is disordered.

This sequence belongs to the peptidase T1A family. The 20S proteasome core is composed of 14 alpha and 14 beta subunits that assemble into four stacked heptameric rings, resulting in a barrel-shaped structure. The two inner rings, each composed of seven catalytic beta subunits, are sandwiched by two outer rings, each composed of seven alpha subunits. The catalytic chamber with the active sites is on the inside of the barrel. Has a gated structure, the ends of the cylinder being occluded by the N-termini of the alpha-subunits. Is capped by the proteasome-associated ATPase, ARC.

The protein localises to the cytoplasm. Its pathway is protein degradation; proteasomal Pup-dependent pathway. The formation of the proteasomal ATPase ARC-20S proteasome complex, likely via the docking of the C-termini of ARC into the intersubunit pockets in the alpha-rings, may trigger opening of the gate for substrate entry. Interconversion between the open-gate and close-gate conformations leads to a dynamic regulation of the 20S proteasome proteolysis activity. Component of the proteasome core, a large protease complex with broad specificity involved in protein degradation. This is Proteasome subunit alpha from Gordonia bronchialis (strain ATCC 25592 / DSM 43247 / BCRC 13721 / JCM 3198 / KCTC 3076 / NBRC 16047 / NCTC 10667) (Rhodococcus bronchialis).